The sequence spans 310 residues: ADP-L-glycero-D-manno-heptose-6-epimerase (310 aa).

NADP(+)-binding positions include 10–11 (FI), 31–32 (DN), lysine 38, lysine 53, 75–79 (EGACS), and asparagine 92. The active-site Proton acceptor is tyrosine 140. Position 144 (lysine 144) interacts with NADP(+). Asparagine 169 provides a ligand contact to substrate. Residues valine 170 and lysine 178 each coordinate NADP(+). The Proton acceptor role is filled by lysine 178. Residues serine 180, histidine 187, 201–204 (FEGS), and arginine 209 contribute to the substrate site. Lysine 267 bears the N6-acetyllysine mark. Position 272 (tyrosine 272) interacts with substrate.

It belongs to the NAD(P)-dependent epimerase/dehydratase family. HldD subfamily. In terms of assembly, homopentamer. It depends on NADP(+) as a cofactor.

The enzyme catalyses ADP-D-glycero-beta-D-manno-heptose = ADP-L-glycero-beta-D-manno-heptose. It functions in the pathway nucleotide-sugar biosynthesis; ADP-L-glycero-beta-D-manno-heptose biosynthesis; ADP-L-glycero-beta-D-manno-heptose from D-glycero-beta-D-manno-heptose 7-phosphate: step 4/4. In terms of biological role, catalyzes the interconversion between ADP-D-glycero-beta-D-manno-heptose and ADP-L-glycero-beta-D-manno-heptose via an epimerization at carbon 6 of the heptose. The protein is ADP-L-glycero-D-manno-heptose-6-epimerase of Escherichia coli (strain ATCC 8739 / DSM 1576 / NBRC 3972 / NCIMB 8545 / WDCM 00012 / Crooks).